Here is a 340-residue protein sequence, read N- to C-terminus: MAELYYDNQADLNRLKHKPIAIIGFGSQGHAHARNLADSGLDVRVGLYPGSKSWAKVEEAGLKVMTVAEAAREAQIVMILTPDIGQAELYREHIAPAMEPGKTLMFAHGFNIRFGQIVPPAGIDVSMVAPKAPGHRVREVFVQGGGVPALIAVEQDATGGAFEDALAYAKGLGCTRAGVLRTTFAEETETDLFGEQVVLCGGVSALVKAAFETLVEAGYQPEVAYFECMHELKLIVDLFYQGGLNYMRYSVSDTAEWGDYTAGPKIITEQTRAAMRQILADIQSGAFAEDWIEENHNGRPRFNAYRQADINHPIEQIGRELRRMMPFVNPREVKPGEGGA.

The KARI N-terminal Rossmann domain maps to 2 to 182 (AELYYDNQAD…GCTRAGVLRT (181 aa)). Residues 25–28 (FGSQ), S51, S53, and 83–86 (DIGQ) each bind NADP(+). The active site involves H108. An NADP(+)-binding site is contributed by G134. Residues 183–328 (TFAEETETDL…RELRRMMPFV (146 aa)) form the KARI C-terminal knotted domain. Positions 191, 195, 227, and 231 each coordinate Mg(2+). A substrate-binding site is contributed by S252.

It belongs to the ketol-acid reductoisomerase family. Requires Mg(2+) as cofactor.

It catalyses the reaction (2R)-2,3-dihydroxy-3-methylbutanoate + NADP(+) = (2S)-2-acetolactate + NADPH + H(+). The catalysed reaction is (2R,3R)-2,3-dihydroxy-3-methylpentanoate + NADP(+) = (S)-2-ethyl-2-hydroxy-3-oxobutanoate + NADPH + H(+). It participates in amino-acid biosynthesis; L-isoleucine biosynthesis; L-isoleucine from 2-oxobutanoate: step 2/4. The protein operates within amino-acid biosynthesis; L-valine biosynthesis; L-valine from pyruvate: step 2/4. Its function is as follows. Involved in the biosynthesis of branched-chain amino acids (BCAA). Catalyzes an alkyl-migration followed by a ketol-acid reduction of (S)-2-acetolactate (S2AL) to yield (R)-2,3-dihydroxy-isovalerate. In the isomerase reaction, S2AL is rearranged via a Mg-dependent methyl migration to produce 3-hydroxy-3-methyl-2-ketobutyrate (HMKB). In the reductase reaction, this 2-ketoacid undergoes a metal-dependent reduction by NADPH to yield (R)-2,3-dihydroxy-isovalerate. The protein is Ketol-acid reductoisomerase (NADP(+)) of Chloroflexus aggregans (strain MD-66 / DSM 9485).